The primary structure comprises 370 residues: Probable G-protein coupled receptor 85 (370 aa).

Residues 1-25 lie on the Extracellular side of the membrane; the sequence is MANYSHAADNILQNLSPLTAFLKLT. Asn3 is a glycosylation site (N-linked (GlcNAc...) asparagine). A helical transmembrane segment spans residues 26-46; the sequence is SLGFIIGVSVVGNLLISILLA. The Cytoplasmic segment spans residues 47–57; sequence KDKTLHRAPYY. The helical transmembrane segment at 58-78 threads the bilayer; sequence FLLDLCCSDILRSAICFPFVF. The Extracellular portion of the chain corresponds to 79–96; it reads NSVKNGSTWTYGTLTCKV. N-linked (GlcNAc...) asparagine glycosylation is present at Asn83. A disulfide bridge links Cys94 with Cys172. The helical transmembrane segment at 97-117 threads the bilayer; sequence IAFLGVLSCFHTAFMLFCISV. Topologically, residues 118–137 are cytoplasmic; the sequence is TRYLAIAHHRFYTKRLTFWT. Residues 138–158 form a helical membrane-spanning segment; that stretch reads CLAVICMVWTLSVAMAFPPVL. Residues 159–188 lie on the Extracellular side of the membrane; the sequence is DVGTYSFIREEDQCTFQHRSFRANDSLGFM. An N-linked (GlcNAc...) asparagine glycan is attached at Asn182. The chain crosses the membrane as a helical span at residues 189-209; that stretch reads LLLALILLATQLVYLKLIFFV. At 210-286 the chain is on the cytoplasmic side; it reads HDRRKMKPVQ…FKMEKRISRM (77 aa). A helical membrane pass occupies residues 287–307; sequence FYIMTFLFLTLWGPYLVACYW. Residues 308–313 are Extracellular-facing; that stretch reads RVFARG. The helical transmembrane segment at 314-334 threads the bilayer; it reads PVVPGGFLTAAVWMSFAQAGI. The Cytoplasmic portion of the chain corresponds to 335 to 370; the sequence is NPFVCIFSNRELRRCFSTTLLYCRKSRLPREPYCVI.

It belongs to the G-protein coupled receptor 1 family. In terms of assembly, interacts with DLG4 and DLG3.

Its subcellular location is the cell membrane. The protein resides in the endoplasmic reticulum. Orphan receptor. The protein is Probable G-protein coupled receptor 85 (GPR85) of Pongo abelii (Sumatran orangutan).